The following is a 559-amino-acid chain: Coiled-coil domain-containing protein 63 (559 aa).

Coiled coils occupy residues 14-70 (ELSE…QAET), 185-261 (EKAA…KLKS), and 364-414 (QQQS…VEKL).

In terms of biological role, plays a role in spermiogenesis. Involved in the elongation of flagella and the formation of sperm heads. The polypeptide is Coiled-coil domain-containing protein 63 (Rattus norvegicus (Rat)).